The primary structure comprises 309 residues: Interferon-inducible double-stranded RNA-dependent protein kinase activator A homolog A (309 aa).

The segment at 1 to 22 (MSQERFPAAPKMSSEKPTSLDA) is disordered. DRBM domains lie at 31-98 (TPIQ…ILRG), 123-191 (NPVG…KFKT), and 236-304 (DYVK…YLKI).

Belongs to the PRKRA family. As to quaternary structure, homodimer. Interacts with dicer1 and eif2ak2/pkr. Also able to interact with dsRNA.

It localises to the cytoplasm. The protein resides in the perinuclear region. It is found in the nucleus. Its function is as follows. Activates eif2ak2/pkr in the absence of double-stranded RNA (dsRNA), leading to phosphorylation of eif2s1/efi2-alpha and inhibition of translation and induction of apoptosis. Required for siRNA production by dicer1 and for subsequent siRNA-mediated post-transcriptional gene silencing. Does not seem to be required for processing of pre-miRNA to miRNA by dicer1. The sequence is that of Interferon-inducible double-stranded RNA-dependent protein kinase activator A homolog A (prkra-a) from Xenopus laevis (African clawed frog).